The sequence spans 283 residues: uncharacterized protein (283 aa).

Residues Met1–Ser21 are disordered. Residues Ser41–Leu61 form a helical membrane-spanning segment.

The protein belongs to the APS1/VSP family.

Its subcellular location is the membrane. This is an uncharacterized protein from Arabidopsis thaliana (Mouse-ear cress).